The following is a 513-amino-acid chain: Bifunctional purine biosynthesis protein PurH (513 aa).

An MGS-like domain is found at 1 to 144 (MSKRALISVS…KNHERVGIVV (144 aa)).

Belongs to the PurH family.

It catalyses the reaction (6R)-10-formyltetrahydrofolate + 5-amino-1-(5-phospho-beta-D-ribosyl)imidazole-4-carboxamide = 5-formamido-1-(5-phospho-D-ribosyl)imidazole-4-carboxamide + (6S)-5,6,7,8-tetrahydrofolate. The enzyme catalyses IMP + H2O = 5-formamido-1-(5-phospho-D-ribosyl)imidazole-4-carboxamide. It functions in the pathway purine metabolism; IMP biosynthesis via de novo pathway; 5-formamido-1-(5-phospho-D-ribosyl)imidazole-4-carboxamide from 5-amino-1-(5-phospho-D-ribosyl)imidazole-4-carboxamide (10-formyl THF route): step 1/1. It participates in purine metabolism; IMP biosynthesis via de novo pathway; IMP from 5-formamido-1-(5-phospho-D-ribosyl)imidazole-4-carboxamide: step 1/1. In Moorella thermoacetica (strain ATCC 39073 / JCM 9320), this protein is Bifunctional purine biosynthesis protein PurH.